The chain runs to 152 residues: Acidic phospholipase A2 homolog textilotoxin D chain (152 aa).

The signal sequence occupies residues 1 to 19 (MHPAHLLVLLGVCVSLLGA). 7 disulfides stabilise this stretch: cysteine 38-cysteine 104, cysteine 54-cysteine 151, cysteine 56-cysteine 72, cysteine 71-cysteine 132, cysteine 78-cysteine 125, cysteine 88-cysteine 118, and cysteine 111-cysteine 123. Asparagine 112 carries N-linked (GlcNAc...) asparagine glycosylation.

Belongs to the phospholipase A2 family. Group I subfamily. D49 sub-subfamily. Heterohexamer. 2 forms exist: 2 A or 2 B chains, 2 C chains and 2 covalently-linked D chains, and 1 A or 1 B, 1 C, 2 covalently-linked D chains and 2 differentially glycosylated covalently-linked D chains. Textilotoxin was originally described as pentameric. As to expression, expressed by the venom gland.

The protein resides in the secreted. Its function is as follows. Snake venom oligomeric phospholipase A2 that has potent presynaptic neurotoxicity. Chain D is not itself neurotoxic, but it is essential for the neurotoxicity of textilotoxin. Chain D possesses a very low phospholipase activity. The sequence is that of Acidic phospholipase A2 homolog textilotoxin D chain from Pseudonaja textilis (Eastern brown snake).